A 171-amino-acid chain; its full sequence is Nicotinamide-nucleotide adenylyltransferase (171 aa).

Belongs to the archaeal NMN adenylyltransferase family.

It is found in the cytoplasm. It catalyses the reaction beta-nicotinamide D-ribonucleotide + ATP + H(+) = diphosphate + NAD(+). Its pathway is cofactor biosynthesis; NAD(+) biosynthesis; NAD(+) from nicotinamide D-ribonucleotide: step 1/1. This Methanococcus maripaludis (strain C6 / ATCC BAA-1332) protein is Nicotinamide-nucleotide adenylyltransferase.